A 97-amino-acid polypeptide reads, in one-letter code: MSRKCELTGVGVLYGNNVSHSQRKTRRRFEPNLRSVKFISDITTAEYRLSVSARCISSVEKAGGFDAYMLKANNDALSTTAKAIKKKIIQTKMAKSL.

It belongs to the bacterial ribosomal protein bL28 family.

The polypeptide is Large ribosomal subunit protein bL28 (Rickettsia bellii (strain OSU 85-389)).